Consider the following 22-residue polypeptide: MICOS complex subunit MIC60 (22 aa).

This sequence belongs to the MICOS complex subunit Mic60 family. As to quaternary structure, component of the mitochondrial contact site and cristae organizing system (MICOS) complex, composed of at least MICOS10/MIC10, CHCHD3/MIC19, CHCHD6/MIC25, APOOL/MIC27, IMMT/MIC60, APOO/MIC23/MIC26 and MICOS13/MIC13. This complex was also known under the names MINOS or MitOS complex. The MICOS complex associates with mitochondrial outer membrane proteins SAMM50, MTX1 and MTX2 (together described as components of the mitochondrial outer membrane sorting assembly machinery (SAM) complex) and DNAJC11, mitochondrial inner membrane protein TMEM11 and with HSPA9. The MICOS and SAM complexes together with DNAJC11 are part of a large protein complex spanning both membranes termed the mitochondrial intermembrane space bridging (MIB) complex. Interacts with HSPA1A/HSPA1B and OPA1, preferentially with the soluble OPA1 form. Interacts with MICOS13/MIC13, MICOS10/MIC10, CHCHD3/MIC19, CHCHD6/MIC25, SAMM50 and TMEM11. Interacts with APOO/MIC23/MIC26 and APOOL/MIC27. Interacts with ARMC1. Interacts with ARMC12.

The protein localises to the mitochondrion inner membrane. The protein resides in the mitochondrion. Its function is as follows. Component of the MICOS complex, a large protein complex of the mitochondrial inner membrane that plays crucial roles in the maintenance of crista junctions, inner membrane architecture, and formation of contact sites to the outer membrane. Plays an important role in the maintenance of the MICOS complex stability and the mitochondrial cristae morphology. This chain is MICOS complex subunit MIC60, found in Mesocricetus auratus (Golden hamster).